Reading from the N-terminus, the 20-residue chain is FDKNQPWGVIRDLNVVNFKR.

This chain is Allergen Asp fl 2, found in Aspergillus flavus.